Consider the following 513-residue polypeptide: Sphingolipid C9-methyltransferase (513 aa).

A run of 2 helical transmembrane segments spans residues 52–72 and 74–94; these read ILFS…GLGF and TWVF…WSIM. S-adenosyl-L-methionine-binding positions include 222–223, 259–267, 285–290, and 315–316; these read YT, VLDIGCGWG, TLGRNQ, and YR.

Belongs to the CFA/CMAS family.

It localises to the membrane. The enzyme catalyses a (4E,8E)-4-sphinga-4,8-dienine ceramide + S-adenosyl-L-methionine = a 9-methyl-(4E,8E)-sphinga-4,8-dienine ceramide + S-adenosyl-L-homocysteine + H(+). The protein operates within lipid metabolism; sphingolipid metabolism. Its function is as follows. Catalyzes methylation of the sphingoid base component of glucosylceramides (GluCers) at the C9-position. Sphingolipid C9-methylation requires 4,8-desaturated ceramides as substrates. Glucosylceramides play important roles in growth, differentiation and pathogenicity. The methyl group at the C9-position distinguishes fungal glucosylceramides from those of plants and animals, and may thus play a role in host-pathogen interactions enabling the host to recognize the fungal attack and initiate specific defense responses. Not necessary for vegetative growth at low temperatures, but plays a role in hyphal formation on solid medium. The chain is Sphingolipid C9-methyltransferase from Candida albicans (strain SC5314 / ATCC MYA-2876) (Yeast).